The sequence spans 120 residues: Peptidyl-tRNA hydrolase (120 aa).

Belongs to the PTH2 family.

It localises to the cytoplasm. It catalyses the reaction an N-acyl-L-alpha-aminoacyl-tRNA + H2O = an N-acyl-L-amino acid + a tRNA + H(+). Functionally, the natural substrate for this enzyme may be peptidyl-tRNAs which drop off the ribosome during protein synthesis. This is Peptidyl-tRNA hydrolase from Sulfolobus acidocaldarius (strain ATCC 33909 / DSM 639 / JCM 8929 / NBRC 15157 / NCIMB 11770).